The chain runs to 442 residues: GTPase Obg (442 aa).

An Obg domain is found at 1-158 (MFYDQARIFV…HWLELELKLL (158 aa)). Residues 159-329 (ADVGLVGFPN…LIYHVHKGLE (171 aa)) form the OBG-type G domain. GTP-binding positions include 165-172 (GFPNVGKS), 190-194 (FTTLE), 212-215 (DIPG), 282-285 (NKMD), and 310-312 (SAA). Mg(2+) contacts are provided by Ser-172 and Thr-192. Residues 349–427 (FTGKTEERFK…IGDLDFDFIE (79 aa)) enclose the OCT domain.

Belongs to the TRAFAC class OBG-HflX-like GTPase superfamily. OBG GTPase family. In terms of assembly, monomer. Requires Mg(2+) as cofactor.

It is found in the cytoplasm. Functionally, an essential GTPase which binds GTP, GDP and possibly (p)ppGpp with moderate affinity, with high nucleotide exchange rates and a fairly low GTP hydrolysis rate. Plays a role in control of the cell cycle, stress response, ribosome biogenesis and in those bacteria that undergo differentiation, in morphogenesis control. In Heliobacterium modesticaldum (strain ATCC 51547 / Ice1), this protein is GTPase Obg.